Consider the following 661-residue polypeptide: Methyl-accepting chemotaxis protein McpA (661 aa).

Residues M1–K16 lie on the Cytoplasmic side of the membrane. A helical transmembrane segment spans residues L17 to Y37. The Extracellular portion of the chain corresponds to Q38–H281. A Cache domain is found at I152–W228. The helical transmembrane segment at L282–I302 threads the bilayer. Positions R303–H355 constitute an HAMP domain. The Cytoplasmic segment spans residues R303 to E661. Residue E370 is modified to Glutamate methyl ester (Glu). The region spanning S374–A610 is the Methyl-accepting transducer domain. 2 positions are modified to deamidated glutamine: Q593 and Q594. Residue Q594 is modified to Glutamate methyl ester (Gln). Glutamate methyl ester (Glu) occurs at positions 629 and 636.

The protein belongs to the methyl-accepting chemotaxis (MCP) protein family. Interacts with FloT. Post-translationally, deamidated by CheD on Gln-593 and Gln-594, producing glutamate residues. The glutamate residues are then methylated. Other additional sites are deamidated and methylated as well.

The protein resides in the cell membrane. It is found in the membrane raft. Its function is as follows. Chemotactic-signal transducers respond to changes in the concentration of attractants and repellents in the environment, transduce a signal from the outside to the inside of the cell, and facilitate sensory adaptation through the variation of the level of methylation. All amino acids serve as attractants in B.subtilis, they appear to cause an increase in the turnover methyl groups, leading to methylation of an unidentified acceptor, while repellents have been shown to cause a decrease in methyl group turnover. The methyl groups are added by a methyltransferase and removed by a methylesterase. McpA is required for taxis towards glucose and alpha-methylglucoside. The sequence is that of Methyl-accepting chemotaxis protein McpA (mcpA) from Bacillus subtilis (strain 168).